The sequence spans 545 residues: CTP synthase (545 aa).

Residues 1-266 (MATNYIFVTG…DDFVCERFRL (266 aa)) are amidoligase domain. Ser14 lines the CTP pocket. Residue Ser14 coordinates UTP. ATP is bound by residues 15–20 (SLGKGI) and Asp72. Mg(2+)-binding residues include Asp72 and Glu140. Residues 147–149 (DIE), 187–192 (KTKPTQ), and Lys223 contribute to the CTP site. Residues 187–192 (KTKPTQ) and Lys223 contribute to the UTP site. Residue 239 to 241 (KDV) participates in ATP binding. Positions 291–542 (TIGMVGKYTE…VKAAYENHKK (252 aa)) constitute a Glutamine amidotransferase type-1 domain. Gly352 provides a ligand contact to L-glutamine. The Nucleophile; for glutamine hydrolysis role is filled by Cys379. Residues 380-383 (LGMQ), Glu403, and Arg470 each bind L-glutamine. Residues His515 and Glu517 contribute to the active site.

This sequence belongs to the CTP synthase family. As to quaternary structure, homotetramer.

It catalyses the reaction UTP + L-glutamine + ATP + H2O = CTP + L-glutamate + ADP + phosphate + 2 H(+). The catalysed reaction is L-glutamine + H2O = L-glutamate + NH4(+). The enzyme catalyses UTP + NH4(+) + ATP = CTP + ADP + phosphate + 2 H(+). Its pathway is pyrimidine metabolism; CTP biosynthesis via de novo pathway; CTP from UDP: step 2/2. Its activity is regulated as follows. Allosterically activated by GTP, when glutamine is the substrate; GTP has no effect on the reaction when ammonia is the substrate. The allosteric effector GTP functions by stabilizing the protein conformation that binds the tetrahedral intermediate(s) formed during glutamine hydrolysis. Inhibited by the product CTP, via allosteric rather than competitive inhibition. Functionally, catalyzes the ATP-dependent amination of UTP to CTP with either L-glutamine or ammonia as the source of nitrogen. Regulates intracellular CTP levels through interactions with the four ribonucleotide triphosphates. In Haemophilus influenzae (strain PittGG), this protein is CTP synthase.